The primary structure comprises 195 residues: Imidazoleglycerol-phosphate dehydratase (195 aa).

This sequence belongs to the imidazoleglycerol-phosphate dehydratase family.

Its subcellular location is the cytoplasm. The enzyme catalyses D-erythro-1-(imidazol-4-yl)glycerol 3-phosphate = 3-(imidazol-4-yl)-2-oxopropyl phosphate + H2O. Its pathway is amino-acid biosynthesis; L-histidine biosynthesis; L-histidine from 5-phospho-alpha-D-ribose 1-diphosphate: step 6/9. This Trichlorobacter lovleyi (strain ATCC BAA-1151 / DSM 17278 / SZ) (Geobacter lovleyi) protein is Imidazoleglycerol-phosphate dehydratase.